The sequence spans 302 residues: tRNA dimethylallyltransferase (302 aa).

12–19 provides a ligand contact to ATP; it reads GPTASGKS. Residue 14 to 19 coordinates substrate; it reads TASGKS. Residues 37–40 form an interaction with substrate tRNA region; the sequence is DSMQ.

This sequence belongs to the IPP transferase family. Monomer. Requires Mg(2+) as cofactor.

It catalyses the reaction adenosine(37) in tRNA + dimethylallyl diphosphate = N(6)-dimethylallyladenosine(37) in tRNA + diphosphate. In terms of biological role, catalyzes the transfer of a dimethylallyl group onto the adenine at position 37 in tRNAs that read codons beginning with uridine, leading to the formation of N6-(dimethylallyl)adenosine (i(6)A). This is tRNA dimethylallyltransferase from Corynebacterium diphtheriae (strain ATCC 700971 / NCTC 13129 / Biotype gravis).